The chain runs to 82 residues: Putative antimicrobial peptide 7848 (82 aa).

A signal peptide spans 1 to 17; the sequence is MNENLWAAPAPKKLSKH. Positions 16–60 are disordered; the sequence is KHFFGRGGPLGKETGPNLFPKKPGAGKGLGFPPTKKPRGQPRVLK. A propeptide spanning residues 38–82 is cleaved from the precursor; that stretch reads PGAGKGLGFPPTKKPRGQPRVLKKPKWNSEGLIGILHRGSDGVQF. A compositionally biased stretch (basic residues) spans 50-60; the sequence is KKPRGQPRVLK.

Belongs to the non-disulfide-bridged peptide (NDBP) superfamily. Short antimicrobial peptide (group 4) family. As to expression, expressed by the venom gland.

It localises to the secreted. The protein is Putative antimicrobial peptide 7848 of Urodacus yaschenkoi (Inland robust scorpion).